A 539-amino-acid polypeptide reads, in one-letter code: GMP synthase [glutamine-hydrolyzing] (539 aa).

Positions 4–202 constitute a Glutamine amidotransferase type-1 domain; that stretch reads KILILDFGSQ…VLQIAGAKPD (199 aa). Cys-81 acts as the Nucleophile in catalysis. Active-site residues include His-176 and Glu-178. A GMPS ATP-PPase domain is found at 203 to 395; the sequence is WIMKNHIEEA…LGLPPEMVYR (193 aa). 230–236 lines the ATP pocket; sequence SGGVDSS.

In terms of assembly, homodimer.

It carries out the reaction XMP + L-glutamine + ATP + H2O = GMP + L-glutamate + AMP + diphosphate + 2 H(+). The protein operates within purine metabolism; GMP biosynthesis; GMP from XMP (L-Gln route): step 1/1. Its function is as follows. Catalyzes the synthesis of GMP from XMP. The sequence is that of GMP synthase [glutamine-hydrolyzing] from Burkholderia cenocepacia (strain ATCC BAA-245 / DSM 16553 / LMG 16656 / NCTC 13227 / J2315 / CF5610) (Burkholderia cepacia (strain J2315)).